We begin with the raw amino-acid sequence, 586 residues long: Aspartate--tRNA(Asp/Asn) ligase (586 aa).

Glu175 provides a ligand contact to L-aspartate. The tract at residues 199-202 is aspartate; it reads QIFK. Arg221 is a binding site for L-aspartate. Residues 221 to 223 and Gln230 contribute to the ATP site; that span reads RDE. Position 448 (His448) interacts with L-aspartate. Glu482 contributes to the ATP binding site. Arg489 is an L-aspartate binding site. Residue 534–537 coordinates ATP; sequence GVDR.

This sequence belongs to the class-II aminoacyl-tRNA synthetase family. Type 1 subfamily. Homodimer.

It localises to the cytoplasm. The catalysed reaction is tRNA(Asx) + L-aspartate + ATP = L-aspartyl-tRNA(Asx) + AMP + diphosphate. Aspartyl-tRNA synthetase with relaxed tRNA specificity since it is able to aspartylate not only its cognate tRNA(Asp) but also tRNA(Asn). Reaction proceeds in two steps: L-aspartate is first activated by ATP to form Asp-AMP and then transferred to the acceptor end of tRNA(Asp/Asn). The sequence is that of Aspartate--tRNA(Asp/Asn) ligase from Syntrophomonas wolfei subsp. wolfei (strain DSM 2245B / Goettingen).